Consider the following 249-residue polypeptide: Probable transcriptional regulatory protein Dtur_1615 (249 aa).

The protein belongs to the TACO1 family.

It localises to the cytoplasm. The sequence is that of Probable transcriptional regulatory protein Dtur_1615 from Dictyoglomus turgidum (strain DSM 6724 / Z-1310).